The chain runs to 89 residues: Large ribosomal subunit protein uL23cz/uL23cy (89 aa).

This sequence belongs to the universal ribosomal protein uL23 family. As to quaternary structure, part of the 50S ribosomal subunit.

It is found in the plastid. The protein localises to the chloroplast. In terms of biological role, binds to 23S rRNA. The sequence is that of Large ribosomal subunit protein uL23cz/uL23cy (rpl23-A) from Pelargonium hortorum (Common geranium).